Reading from the N-terminus, the 1230-residue chain is Formin-like protein 14 (1230 aa).

The Phosphatase tensin-type domain maps to methionine 1–serine 194. Cysteine 127 acts as the Phosphocysteine intermediate in catalysis. Positions glutamate 200–valine 339 constitute a C2 tensin-type domain. Disordered stretches follow at residues phenylalanine 412 to glutamate 432, histidine 460 to leucine 822, and glutamate 1187 to threonine 1230. A compositionally biased stretch (low complexity) spans aspartate 484–serine 496. 4 stretches are compositionally biased toward pro residues: residues leucine 503 to leucine 514, serine 524 to leucine 535, serine 545 to leucine 556, and serine 566 to proline 575. Positions asparagine 579–asparagine 591 are enriched in polar residues. Composition is skewed to pro residues over residues lysine 592–serine 630, proline 637–serine 649, glutamine 660–arginine 672, alanine 679–threonine 688, proline 699–lysine 711, proline 718–proline 728, and alanine 735–glycine 766. The 399-residue stretch at valine 809–lysine 1207 folds into the FH2 domain. Residues glutamate 1187–valine 1215 show a composition bias toward basic and acidic residues.

The protein belongs to the formin-like family. Class-II subfamily.

In Arabidopsis thaliana (Mouse-ear cress), this protein is Formin-like protein 14 (FH14).